The chain runs to 503 residues: Cytochrome P450 monooxygenase roqO (503 aa).

Residues 11-31 traverse the membrane as a helical segment; that stretch reads YSGTACAISLFIFGITLLFPF. Asparagine 205 is a glycosylation site (N-linked (GlcNAc...) asparagine). Residue cysteine 444 participates in heme binding.

This sequence belongs to the cytochrome P450 family. The cofactor is heme.

The protein localises to the membrane. It participates in alkaloid biosynthesis. Its function is as follows. Cytochrome P450 monooxygenase; part of the gene cluster that mediates the biosynthesis of the mycotoxin meleagrin. The first stage is catalyzed by the dipeptide synthase roqA which condenses histidine and tryptophan to produce histidyltryptophanyldiketopiperazine (HTD). HTD is then converted to roquefortine C through two possible pathways. In the first pathway, prenyltransferase roqD transforms HTD to the intermediate roquefortine D, which is in turn converted to roquefortine C by the cytochrome P450 monooxygenase roqR. In the second pathway, HTD is first converted to the intermediate dehydrohistidyltryptophanyldi-ketopiperazine (DHTD) by roqR which is then prenylated by roqD to form roquefortine C. Roquefortine C can be further transformed to meleagrin via three more reactions including oxydation to glandicolin A by roqM, which is further reduced to glandicoline B by roqO. Finally, glandicoline B is converted to meleagrin by the glandicoline B O-methyltransferase roqN. More studies identified further branching and additional metabolites produced by the roquefortine/meleagrin cluster, including roquefortine F, roquefortine L, roquefortine M, roquefortine N and neoxaline. The polypeptide is Cytochrome P450 monooxygenase roqO (Penicillium rubens (strain ATCC 28089 / DSM 1075 / NRRL 1951 / Wisconsin 54-1255) (Penicillium chrysogenum)).